The chain runs to 311 residues: E3 ubiquitin-protein ligase RNF126 (311 aa).

Residues C13, C16, C29, and C32 each contribute to the Zn(2+) site. A C4-type zinc finger spans residues 13–32 (CHSCTAEIIPRLPEYTCPRC). Disordered regions lie at residues 42-62 (ETRN…NRPS) and 95-133 (GTSG…RRAA). Positions 101 to 114 (EEPRDGESRREHQS) are enriched in basic and acidic residues. The segment covering 123-133 (PRARLSTRRAA) has biased composition (basic residues). The segment at 227-268 (CPVCKEDYTVGESVRQLPCNHLFHNDCIIPWLEQHDTCPVCR) adopts an RING-type zinc-finger fold. A disordered region spans residues 274–311 (QNTATNPPGLTEMTFSSSSTSSSSSTSPTDENNAANNS). Residues 289–300 (SSSSTSSSSSTS) show a composition bias toward low complexity. A compositionally biased stretch (polar residues) spans 301–311 (PTDENNAANNS).

The protein resides in the cytoplasm. It is found in the nucleus. It carries out the reaction S-ubiquitinyl-[E2 ubiquitin-conjugating enzyme]-L-cysteine + [acceptor protein]-L-lysine = [E2 ubiquitin-conjugating enzyme]-L-cysteine + N(6)-ubiquitinyl-[acceptor protein]-L-lysine.. It functions in the pathway protein modification; protein ubiquitination. In terms of biological role, E3 ubiquitin-protein ligase that mediates ubiquitination oF target proteins. Depending on the associated E2 ligase, mediates 'Lys-27'-, 'Lys-29'-, 'Lys-48'- and/or 'Lys-63'-linked polyubiquitination of substrates. Part of a BAG6-dependent quality control process ensuring that proteins of the secretory pathway that are mislocalized to the cytosol are degraded by the proteasome. Probably acts by providing the ubiquitin ligase activity associated with the BAG6 complex and be responsible for ubiquitination of the hydrophobic mislocalized proteins and their targeting to the proteasome. This is E3 ubiquitin-protein ligase RNF126 from Xenopus tropicalis (Western clawed frog).